A 241-amino-acid polypeptide reads, in one-letter code: Small ribosomal subunit protein uS3 (241 aa).

Residues 39–107 (IRTYLKKELY…PLSVNIKEEK (69 aa)) enclose the KH type-2 domain. The segment at 214–241 (AEVKEEQQKEGARRPKRAPKRENSGKAE) is disordered. Over residues 215–226 (EVKEEQQKEGAR) the composition is skewed to basic and acidic residues.

It belongs to the universal ribosomal protein uS3 family. Part of the 30S ribosomal subunit. Forms a tight complex with proteins S10 and S14.

Its function is as follows. Binds the lower part of the 30S subunit head. Binds mRNA in the 70S ribosome, positioning it for translation. This chain is Small ribosomal subunit protein uS3, found in Sulfurimonas denitrificans (strain ATCC 33889 / DSM 1251) (Thiomicrospira denitrificans (strain ATCC 33889 / DSM 1251)).